The sequence spans 385 residues: Palmitoyl-[acyl-carrier-protein] 4-desaturase, chloroplastic (385 aa).

The N-terminal 36 residues, 1–36 (MAMKLNALMTLQCPKRNMFTRIAPPQAGRVRSKVSM), are a transit peptide targeting the chloroplast. Glu126, Glu164, His167, Glu217, Glu250, and His253 together coordinate Fe cation.

It belongs to the fatty acid desaturase type 2 family. Homodimer. Fe(2+) is required as a cofactor. Found only in tissues which synthesize petroselinic acid, such as developing seeds.

Its subcellular location is the plastid. The protein resides in the chloroplast. The catalysed reaction is hexadecanoyl-[ACP] + 2 reduced [2Fe-2S]-[ferredoxin] + O2 + 2 H(+) = (4Z)-hexadecenoyl-[ACP] + 2 oxidized [2Fe-2S]-[ferredoxin] + 2 H2O. In terms of biological role, converts palmitoyl-ACP to (4Z)-hexadec-4-enoyl-ACP by introduction of a cis double bond between carbons 4 and 5 of the acyl chain. In Coriandrum sativum (Coriander), this protein is Palmitoyl-[acyl-carrier-protein] 4-desaturase, chloroplastic.